We begin with the raw amino-acid sequence, 138 residues long: Small ribosomal subunit protein uS11c (138 aa).

The tract at residues 1 to 22 is disordered; the sequence is MAKPILRVGSRKNTRSASRKNV. The segment covering 9–22 has biased composition (basic residues); the sequence is GSRKNTRSASRKNV.

Belongs to the universal ribosomal protein uS11 family. Part of the 30S ribosomal subunit.

It localises to the plastid. The protein localises to the chloroplast. The polypeptide is Small ribosomal subunit protein uS11c (Draba nemorosa (Woodland whitlowgrass)).